An 811-amino-acid polypeptide reads, in one-letter code: Exocyst complex component 6B (811 aa).

The stretch at 50–119 (MEKLETRIRN…LVIAMEELKQ (70 aa)) forms a coiled coil. Positions 260-280 (STSPKSEQDSGILDVEDEEDD) are disordered.

The protein belongs to the SEC15 family. As to quaternary structure, the exocyst complex is composed of SEC3, SEC5, SEC6, SEC8, SEC10, SEC15, EXO70 and EXO84.

In terms of biological role, component of the exocyst complex involved in the docking of exocytic vesicles with fusion sites on the plasma membrane. In Homo sapiens (Human), this protein is Exocyst complex component 6B (EXOC6B).